Here is a 479-residue protein sequence, read N- to C-terminus: Ribosomal RNA small subunit methyltransferase F (479 aa).

S-adenosyl-L-methionine-binding positions include 125–131 (AAAPGSK), glutamate 149, aspartate 176, and aspartate 194. Residue cysteine 247 is the Nucleophile of the active site.

It belongs to the class I-like SAM-binding methyltransferase superfamily. RsmB/NOP family.

It is found in the cytoplasm. The enzyme catalyses cytidine(1407) in 16S rRNA + S-adenosyl-L-methionine = 5-methylcytidine(1407) in 16S rRNA + S-adenosyl-L-homocysteine + H(+). In terms of biological role, specifically methylates the cytosine at position 1407 (m5C1407) of 16S rRNA. In Escherichia coli O7:K1 (strain IAI39 / ExPEC), this protein is Ribosomal RNA small subunit methyltransferase F.